Reading from the N-terminus, the 401-residue chain is Riboflavin biosynthesis protein RibBA (401 aa).

The interval 1 to 203 (MTDFQFSKVE…IQQLQEYRRK (203 aa)) is DHBP synthase. D-ribulose 5-phosphate is bound by residues 30–31 (RE), D35, 142–146 (RNGHT), and E166. E31 contacts Mg(2+). H145 contacts Mg(2+). The GTP cyclohydrolase II stretch occupies residues 204–401 (HDSLVKQISV…QIKMGHMFNF (198 aa)). A GTP-binding site is contributed by 254–258 (RIHSE). Residues C259, C270, and C272 each contribute to the Zn(2+) site. GTP is bound by residues Q275, 297–299 (EGR), and T319. D331 (proton acceptor; for GTP cyclohydrolase activity) is an active-site residue. The active-site Nucleophile; for GTP cyclohydrolase activity is the R333. Residues T354 and K359 each contribute to the GTP site.

This sequence in the N-terminal section; belongs to the DHBP synthase family. In the C-terminal section; belongs to the GTP cyclohydrolase II family. It depends on Mg(2+) as a cofactor. Requires Mn(2+) as cofactor. Zn(2+) serves as cofactor.

The enzyme catalyses D-ribulose 5-phosphate = (2S)-2-hydroxy-3-oxobutyl phosphate + formate + H(+). The catalysed reaction is GTP + 4 H2O = 2,5-diamino-6-hydroxy-4-(5-phosphoribosylamino)-pyrimidine + formate + 2 phosphate + 3 H(+). Its pathway is cofactor biosynthesis; riboflavin biosynthesis; 2-hydroxy-3-oxobutyl phosphate from D-ribulose 5-phosphate: step 1/1. The protein operates within cofactor biosynthesis; riboflavin biosynthesis; 5-amino-6-(D-ribitylamino)uracil from GTP: step 1/4. Functionally, catalyzes the conversion of D-ribulose 5-phosphate to formate and 3,4-dihydroxy-2-butanone 4-phosphate. In terms of biological role, catalyzes the conversion of GTP to 2,5-diamino-6-ribosylamino-4(3H)-pyrimidinone 5'-phosphate (DARP), formate and pyrophosphate. The chain is Riboflavin biosynthesis protein RibBA from Actinobacillus pleuropneumoniae serotype 7 (strain AP76).